The sequence spans 351 residues: Probable dual-specificity RNA methyltransferase RlmN (351 aa).

Glu98 (proton acceptor) is an active-site residue. One can recognise a Radical SAM core domain in the interval 104–332 (TQKRLTVCVS…ASIRRSRGLD (229 aa)). Residues Cys111 and Cys337 are joined by a disulfide bond. Residues Cys118, Cys122, and Cys125 each contribute to the [4Fe-4S] cluster site. S-adenosyl-L-methionine-binding positions include 165-166 (GE), Ser195, 218-220 (SLH), and Asn294. The active-site S-methylcysteine intermediate is the Cys337.

This sequence belongs to the radical SAM superfamily. RlmN family. [4Fe-4S] cluster is required as a cofactor.

It localises to the cytoplasm. The catalysed reaction is adenosine(2503) in 23S rRNA + 2 reduced [2Fe-2S]-[ferredoxin] + 2 S-adenosyl-L-methionine = 2-methyladenosine(2503) in 23S rRNA + 5'-deoxyadenosine + L-methionine + 2 oxidized [2Fe-2S]-[ferredoxin] + S-adenosyl-L-homocysteine. The enzyme catalyses adenosine(37) in tRNA + 2 reduced [2Fe-2S]-[ferredoxin] + 2 S-adenosyl-L-methionine = 2-methyladenosine(37) in tRNA + 5'-deoxyadenosine + L-methionine + 2 oxidized [2Fe-2S]-[ferredoxin] + S-adenosyl-L-homocysteine. Its function is as follows. Specifically methylates position 2 of adenine 2503 in 23S rRNA and position 2 of adenine 37 in tRNAs. This Acaryochloris marina (strain MBIC 11017) protein is Probable dual-specificity RNA methyltransferase RlmN.